A 568-amino-acid chain; its full sequence is Estrogen receptor beta-1 (568 aa).

The segment at 12–169 (SEYAEGDSSL…SLRGKADMHY (158 aa)) is modulating. 2 consecutive NR C4-type zinc fingers follow at residues 170 to 190 (CAVC…CEGC) and 206 to 230 (CPAT…LRKC). The nuclear receptor DNA-binding region spans 170-235 (CAVCSDYASG…RLRKCYEVGM (66 aa)). The 237-residue stretch at 292-528 (SPEELIARIM…DLLLEMLDAH (237 aa)) folds into the NR LBD domain.

The protein belongs to the nuclear hormone receptor family. NR3 subfamily. Binds DNA as a homodimer. Can form a heterodimer with ER-alpha.

The protein resides in the nucleus. Its function is as follows. Binds estrogens with an affinity similar to that of ER-alpha, and activates expression of reporter genes containing estrogen response elements (ERE) in an estrogen-dependent manner. This is Estrogen receptor beta-1 (esr2a) from Carassius auratus (Goldfish).